The chain runs to 677 residues: UvrABC system protein B (677 aa).

The region spanning 31–417 (DRIESGETDI…SDGVVEQIIR (387 aa)) is the Helicase ATP-binding domain. Residue 44 to 51 (GATGTGKS) coordinates ATP. The Beta-hairpin signature appears at 97-120 (YYDYYQPEAYVPKTDTFIEKDASV). The 163-residue stretch at 434-596 (QIDDLLEEIR…VTPVPIKKTV (163 aa)) folds into the Helicase C-terminal domain. The region spanning 629 to 664 (KSHIKSLEAKMYMAAESLMFEEAAELRDEIQSLKEK) is the UVR domain.

Belongs to the UvrB family. Forms a heterotetramer with UvrA during the search for lesions. Interacts with UvrC in an incision complex.

Its subcellular location is the cytoplasm. In terms of biological role, the UvrABC repair system catalyzes the recognition and processing of DNA lesions. A damage recognition complex composed of 2 UvrA and 2 UvrB subunits scans DNA for abnormalities. Upon binding of the UvrA(2)B(2) complex to a putative damaged site, the DNA wraps around one UvrB monomer. DNA wrap is dependent on ATP binding by UvrB and probably causes local melting of the DNA helix, facilitating insertion of UvrB beta-hairpin between the DNA strands. Then UvrB probes one DNA strand for the presence of a lesion. If a lesion is found the UvrA subunits dissociate and the UvrB-DNA preincision complex is formed. This complex is subsequently bound by UvrC and the second UvrB is released. If no lesion is found, the DNA wraps around the other UvrB subunit that will check the other stand for damage. This chain is UvrABC system protein B, found in Tropheryma whipplei (strain TW08/27) (Whipple's bacillus).